We begin with the raw amino-acid sequence, 301 residues long: Mitochondrial carnitine/acylcarnitine carrier protein (301 aa).

Alanine 2 carries the N-acetylalanine modification. The Cytoplasmic portion of the chain corresponds to 2–12 (ADEPKPISPFK). Solcar repeat units lie at residues 8–99 (ISPF…GKKL), 108–196 (LSYP…LKNL), and 207–293 (LSVP…AMKF). A helical membrane pass occupies residues 13-31 (NLLAGGFGGMCLVFVGHPL). Residues 32–73 (DTVKVRLQTQPPSLSGQPPMYSGTLDCFRKTLMREGITGLYR) are Mitochondrial matrix-facing. Residues 74 to 93 (GMAAPIIGVTPMFAVCFFGF) form a helical membrane-spanning segment. Residues 94-112 (GLGKKLQQKSPEDELSYPQ) are Cytoplasmic-facing. The chain crosses the membrane as a helical span at residues 113 to 131 (LFTAGMLSGVFTTGIMTPG). Over 132 to 170 (ERIKCLLQIQASSGENKYSGTLDCAKKLYQEFGIRGFYK) the chain is Mitochondrial matrix. Lysine 148 and lysine 157 each carry N6-acetyllysine. At lysine 170 the chain carries N6-acetyllysine; alternate. Lysine 170 carries the N6-succinyllysine; alternate modification. Residues 171–190 (GTVLTLMRDVPASGMYFMTY) form a helical membrane-spanning segment. At 191-211 (EWLKNLFTPEGKSVSDLSVPR) the chain is on the cytoplasmic side. A helical transmembrane segment spans residues 212–230 (ILVAGGFAGIFNWAVAIPP). The Mitochondrial matrix segment spans residues 231 to 267 (DVLKSRFQTAPPGKYPNGFRDVLRELIREEGVTSLYK). A helical membrane pass occupies residues 268–287 (GFNAVMIRAFPANAACFLGF). The Cytoplasmic portion of the chain corresponds to 288-301 (EIAMKFLNWIAPNL).

This sequence belongs to the mitochondrial carrier (TC 2.A.29) family. As to expression, widely expressed, with highest levels in the liver, intermediate levels in heart, testis and kidney and low levels in brain, including cortex, cerebellum, hippocampus and hypothalamus.

The protein resides in the mitochondrion inner membrane. The enzyme catalyses O-acetyl-(R)-carnitine(in) + (R)-carnitine(out) = O-acetyl-(R)-carnitine(out) + (R)-carnitine(in). It catalyses the reaction an O-acyl-(R)-carnitine(in) + (R)-carnitine(out) = an O-acyl-(R)-carnitine(out) + (R)-carnitine(in). The catalysed reaction is O-propanoyl-(R)-carnitine(in) + (R)-carnitine(out) = O-propanoyl-(R)-carnitine(out) + (R)-carnitine(in). It carries out the reaction O-hexadecanoyl-(R)-carnitine(in) + (R)-carnitine(out) = O-hexadecanoyl-(R)-carnitine(out) + (R)-carnitine(in). The enzyme catalyses O-octanoyl-(R)-carnitine(in) + (R)-carnitine(out) = O-octanoyl-(R)-carnitine(out) + (R)-carnitine(in). It catalyses the reaction (R)-carnitine(in) = (R)-carnitine(out). Functionally, mediates the electroneutral exchange of acylcarnitines (O-acyl-(R)-carnitine or L-acylcarnitine) of different acyl chain lengths (ranging from O-acetyl-(R)-carnitine to long-chain O-acyl-(R)-carnitines) with free carnitine ((R)-carnitine or L-carnitine) across the mitochondrial inner membrane, via a ping-pong mechanism. Key player in the mitochondrial oxidation pathway, it translocates the fatty acids in the form of acylcarnitines into the mitochondrial matrix, where the carnitine palmitoyltransferase 2 (CPT-2) activates them to undergo fatty acid beta-oxidation. Catalyzes the unidirectional transport (uniport) of carnitine at lower rates than the antiport (exchange). This is Mitochondrial carnitine/acylcarnitine carrier protein from Mus musculus (Mouse).